We begin with the raw amino-acid sequence, 310 residues long: D-alanine--D-alanine ligase (310 aa).

One can recognise an ATP-grasp domain in the interval 104–305; sequence KRLFHSEGLP…MPQLAERILQ (202 aa). 135-190 provides a ligand contact to ATP; the sequence is LGDFHGAAFVKPLDSGSSVGISRAVGKDELIRGVAKALSVSHRCMVERAIEGRELT. Mg(2+) contacts are provided by Asp259, Glu272, and Asn274.

This sequence belongs to the D-alanine--D-alanine ligase family. Mg(2+) serves as cofactor. The cofactor is Mn(2+).

Its subcellular location is the cytoplasm. It catalyses the reaction 2 D-alanine + ATP = D-alanyl-D-alanine + ADP + phosphate + H(+). The protein operates within cell wall biogenesis; peptidoglycan biosynthesis. Functionally, cell wall formation. The chain is D-alanine--D-alanine ligase from Magnetococcus marinus (strain ATCC BAA-1437 / JCM 17883 / MC-1).